The primary structure comprises 227 residues: Small ribosomal subunit protein uS3 (227 aa).

The KH type-2 domain occupies 39–107; it reads VREFLDKRLV…PVHINIEEVR (69 aa).

This sequence belongs to the universal ribosomal protein uS3 family. In terms of assembly, part of the 30S ribosomal subunit. Forms a tight complex with proteins S10 and S14.

Functionally, binds the lower part of the 30S subunit head. Binds mRNA in the 70S ribosome, positioning it for translation. This is Small ribosomal subunit protein uS3 from Marinobacter nauticus (strain ATCC 700491 / DSM 11845 / VT8) (Marinobacter aquaeolei).